The following is a 519-amino-acid chain: tRNA pseudouridine synthase Pus10 (519 aa).

The interval 70-98 is disordered; it reads NENEEIDENTKNNEDTENKADDKSQSNEE. The segment covering 77–98 has biased composition (basic and acidic residues); sequence ENTKNNEDTENKADDKSQSNEE. The THUMP domain occupies 144–265; the sequence is NESEENESNI…NQKIYLQINP (122 aa). Asp-334 serves as the catalytic Nucleophile. 2 residues coordinate substrate: Tyr-398 and Tyr-476.

The protein belongs to the pseudouridine synthase Pus10 family.

It catalyses the reaction uridine(54) in tRNA = pseudouridine(54) in tRNA. The enzyme catalyses uridine(55) in tRNA = pseudouridine(55) in tRNA. Functionally, responsible for synthesis of pseudouridine from uracil-54 and uracil-55 in the psi GC loop of transfer RNAs. The chain is tRNA pseudouridine synthase Pus10 from Methanococcus voltae (strain ATCC BAA-1334 / A3).